An 836-amino-acid polypeptide reads, in one-letter code: Translation initiation factor IF-2 (836 aa).

Residues 1 to 234 form a disordered region; it reads MSDTDGKKPL…SLAAMKRKQE (234 aa). Residues 18-27 are compositionally biased toward polar residues; that stretch reads SGQVKQSFSH. Low complexity predominate over residues 50–60; sequence SGSSTTTSSPS. A compositionally biased stretch (basic and acidic residues) spans 88–156; sequence KLREVEDAKR…ATRRAEEAKR (69 aa). The segment covering 167 to 176 has biased composition (low complexity); sequence PAESRASAPP. Residues 185–206 show a composition bias toward basic and acidic residues; sequence SRKEREREADRDRTTKKDDSRR. The tr-type G domain maps to 333-501; it reads PRPPIITIMG…NIALQAEILD (169 aa). Residues 342–349 are G1; it reads GHVDHGKT. 342–349 lines the GTP pocket; sequence GHVDHGKT. Positions 367-371 are G2; the sequence is GITQH. A G3 region spans residues 389-392; sequence DTPG. GTP contacts are provided by residues 389–393 and 443–446; these read DTPGH and NKID. Positions 443 to 446 are G4; that stretch reads NKID. The tract at residues 479–481 is G5; that stretch reads SAK.

It belongs to the TRAFAC class translation factor GTPase superfamily. Classic translation factor GTPase family. IF-2 subfamily.

It is found in the cytoplasm. Its function is as follows. One of the essential components for the initiation of protein synthesis. Protects formylmethionyl-tRNA from spontaneous hydrolysis and promotes its binding to the 30S ribosomal subunits. Also involved in the hydrolysis of GTP during the formation of the 70S ribosomal complex. This is Translation initiation factor IF-2 from Cereibacter sphaeroides (strain ATCC 17029 / ATH 2.4.9) (Rhodobacter sphaeroides).